The primary structure comprises 383 residues: Glutaminyl-peptide cyclotransferase-like protein (383 aa).

A helical transmembrane segment spans residues 33-53 (VQFLPLLLLALAMGLAFYIVW). A disulfide bond links Cys168 and Cys192. Zn(2+) is bound at residue Asp187. Catalysis depends on Glu226, which acts as the Proton acceptor. Zn(2+) is bound at residue Glu227. Asp270 acts as the Proton acceptor in catalysis. A Zn(2+)-binding site is contributed by His352.

This sequence belongs to the glutaminyl-peptide cyclotransferase family. Detected in thalamus, hippocampus, brain cortex, cerebellum, kidney, lung and liver, and at low levels in heart and spleen.

It localises to the golgi apparatus membrane. The catalysed reaction is N-terminal L-glutaminyl-[peptide] = N-terminal 5-oxo-L-prolyl-[peptide] + NH4(+). Functionally, responsible for the biosynthesis of pyroglutamyl peptides. This chain is Glutaminyl-peptide cyclotransferase-like protein (Qpctl), found in Mus musculus (Mouse).